Reading from the N-terminus, the 189-residue chain is Phosphoheptose isomerase (189 aa).

Positions Ala-34–His-189 constitute an SIS domain. Substrate is bound at residue Asn-49–Gly-51. Zn(2+)-binding residues include His-58 and Glu-62. Substrate-binding positions include Glu-62, Asn-91–Asp-92, Ser-117–Ser-119, Ser-122, and Gln-169. Zn(2+) contacts are provided by Gln-169 and His-177.

It belongs to the SIS family. GmhA subfamily. Homotetramer. The cofactor is Zn(2+).

It localises to the cytoplasm. It catalyses the reaction 2 D-sedoheptulose 7-phosphate = D-glycero-alpha-D-manno-heptose 7-phosphate + D-glycero-beta-D-manno-heptose 7-phosphate. It participates in carbohydrate biosynthesis; D-glycero-D-manno-heptose 7-phosphate biosynthesis; D-glycero-alpha-D-manno-heptose 7-phosphate and D-glycero-beta-D-manno-heptose 7-phosphate from sedoheptulose 7-phosphate: step 1/1. Functionally, catalyzes the isomerization of sedoheptulose 7-phosphate in D-glycero-D-manno-heptose 7-phosphate. This chain is Phosphoheptose isomerase, found in Aliarcobacter butzleri (strain RM4018) (Arcobacter butzleri).